A 595-amino-acid polypeptide reads, in one-letter code: Putative histone-lysine N-methyltransferase PRDM6 (595 aa).

Residues 27-90 (FPHGGAGPLK…STPASSSTSA (64 aa)) are disordered. Gly residues predominate over residues 30 to 40 (GGAGPLKGSGA). Residues 49 to 59 (PLQPPPPPPPP) are compositionally biased toward pro residues. Residues 71–90 (PRPASLSSASSTPASSSTSA) show a composition bias toward low complexity. The 120-residue stretch at 246 to 365 (REVCLCTSTV…RGTELLVWYN (120 aa)) folds into the SET domain. The C2H2-type 1; degenerate zinc finger occupies 473 to 495 (WKCGQCFKTFTQRILLQMHVCTQ). C2H2-type zinc fingers lie at residues 501–523 (YQCG…VVTH) and 529–551 (FKCG…IRTH). The C2H2-type 4; degenerate zinc finger occupies 557–579 (FKCERCERSFTQATQLSRHQRMP).

The protein belongs to the class V-like SAM-binding methyltransferase superfamily. As to quaternary structure, interacts with HDAC1, HDAC2, HDAC3, CBX1 and EP300.

Its subcellular location is the nucleus. The catalysed reaction is L-lysyl(20)-[histone H4] + S-adenosyl-L-methionine = N(6)-methyl-L-lysyl(20)-[histone H4] + S-adenosyl-L-homocysteine + H(+). Putative histone methyltransferase that acts as a transcriptional repressor of smooth muscle gene expression. Promotes the transition from differentiated to proliferative smooth muscle by suppressing differentiation and maintaining the proliferative potential of vascular smooth muscle cells. Also plays a role in endothelial cells by inhibiting endothelial cell proliferation, survival and differentiation. It is unclear whether it has histone methyltransferase activity in vivo. According to some authors, it does not act as a histone methyltransferase by itself and represses transcription by recruiting EHMT2/G9a. According to others, it possesses histone methyltransferase activity when associated with other proteins and specifically methylates 'Lys-20' of histone H4 in vitro. 'Lys-20' methylation represents a specific tag for epigenetic transcriptional repression. The polypeptide is Putative histone-lysine N-methyltransferase PRDM6 (PRDM6) (Homo sapiens (Human)).